The sequence spans 643 residues: Asparagine synthetase domain-containing protein 1 (643 aa).

Cysteine 2 functions as the For GATase activity in the catalytic mechanism. Positions 2-184 constitute a Glutamine amidotransferase type-2 domain; the sequence is CGICCSVNFS…ASGLFRIDLK (183 aa). The Asparagine synthetase domain occupies 285–601; the sequence is QFIDVLSVAV…GLTASALLPK (317 aa).

This Homo sapiens (Human) protein is Asparagine synthetase domain-containing protein 1 (ASNSD1).